A 1415-amino-acid polypeptide reads, in one-letter code: Bridge-like lipid transfer protein family member 3B (1415 aa).

The 92-residue stretch at 3–94 (GLIKKQILKH…DKVIMEMSTC (92 aa)) folds into the Chorein N-terminal domain. Disordered stretches follow at residues 267–300 (STEQ…STTP) and 882–904 (KSPL…SEGV). Over residues 275–300 (ASETTQSPTPPVSSQQVKNPQTSTTP) the composition is skewed to polar residues. Positions 1367-1404 (KAAGISKEQLVEENECLKQELAKTKMALAESHMERDRL) form a coiled coil.

Its subcellular location is the cytoplasm. It localises to the cytosol. The protein resides in the early endosome. Its function is as follows. Tube-forming lipid transport protein which mediates the transfer of lipids between membranes at organelle contact sites. Required for retrograde traffic of vesicle clusters in the early endocytic pathway to the Golgi complex. In Xenopus laevis (African clawed frog), this protein is Bridge-like lipid transfer protein family member 3B (bltp3b).